The sequence spans 102 residues: YcgL domain-containing protein MS1047 (102 aa).

A YcgL domain is found at 1-85 (MLCAIYKSKK…KQESLFEQFK (85 aa)).

The protein is YcgL domain-containing protein MS1047 of Mannheimia succiniciproducens (strain KCTC 0769BP / MBEL55E).